We begin with the raw amino-acid sequence, 344 residues long: Ferrochelatase (344 aa).

2 residues coordinate Fe cation: histidine 190 and glutamate 270.

It belongs to the ferrochelatase family.

Its subcellular location is the cytoplasm. The catalysed reaction is heme b + 2 H(+) = protoporphyrin IX + Fe(2+). Its pathway is porphyrin-containing compound metabolism; protoheme biosynthesis; protoheme from protoporphyrin-IX: step 1/1. Catalyzes the ferrous insertion into protoporphyrin IX. In Rickettsia felis (strain ATCC VR-1525 / URRWXCal2) (Rickettsia azadi), this protein is Ferrochelatase.